Consider the following 732-residue polypeptide: Inducible ornithine decarboxylase (732 aa).

K355 bears the N6-(pyridoxal phosphate)lysine mark.

Belongs to the Orn/Lys/Arg decarboxylase class-I family. It depends on pyridoxal 5'-phosphate as a cofactor.

It carries out the reaction L-ornithine + H(+) = putrescine + CO2. It participates in amine and polyamine biosynthesis; putrescine biosynthesis via L-ornithine pathway; putrescine from L-ornithine: step 1/1. The first enzyme leading to putrescine and thus polyamine synthesis. In Escherichia coli (strain K12), this protein is Inducible ornithine decarboxylase.